The primary structure comprises 84 residues: Tetrahydromethanopterin S-methyltransferase subunit G (84 aa).

The chain crosses the membrane as a helical span at residues 50-70 (IGILYGLVIGIILSYILPALI).

This sequence belongs to the MtrG family. In terms of assembly, the complex is composed of 8 subunits; MtrA, MtrB, MtrC, MtrD, MtrE, MtrF, MtrG and MtrH.

It is found in the cell membrane. The catalysed reaction is 5-methyl-5,6,7,8-tetrahydromethanopterin + coenzyme M + 2 Na(+)(in) = 5,6,7,8-tetrahydromethanopterin + methyl-coenzyme M + 2 Na(+)(out). It functions in the pathway one-carbon metabolism; methanogenesis from CO(2); methyl-coenzyme M from 5,10-methylene-5,6,7,8-tetrahydromethanopterin: step 2/2. In terms of biological role, part of a complex that catalyzes the formation of methyl-coenzyme M and tetrahydromethanopterin from coenzyme M and methyl-tetrahydromethanopterin. This is an energy-conserving, sodium-ion translocating step. This is Tetrahydromethanopterin S-methyltransferase subunit G from Methanocaldococcus jannaschii (strain ATCC 43067 / DSM 2661 / JAL-1 / JCM 10045 / NBRC 100440) (Methanococcus jannaschii).